The chain runs to 129 residues: Small ribosomal subunit protein uS11 (129 aa).

It belongs to the universal ribosomal protein uS11 family. Part of the 30S ribosomal subunit. Interacts with proteins S7 and S18. Binds to IF-3.

Located on the platform of the 30S subunit, it bridges several disparate RNA helices of the 16S rRNA. Forms part of the Shine-Dalgarno cleft in the 70S ribosome. The sequence is that of Small ribosomal subunit protein uS11 from Bradyrhizobium sp. (strain BTAi1 / ATCC BAA-1182).